Here is a 450-residue protein sequence, read N- to C-terminus: Phosphoglucosamine mutase (450 aa).

Ser-101 acts as the Phosphoserine intermediate in catalysis. Mg(2+) is bound by residues Ser-101, Asp-241, Asp-243, and Asp-245. The residue at position 101 (Ser-101) is a Phosphoserine.

Belongs to the phosphohexose mutase family. The cofactor is Mg(2+). Post-translationally, activated by phosphorylation.

It carries out the reaction alpha-D-glucosamine 1-phosphate = D-glucosamine 6-phosphate. Catalyzes the conversion of glucosamine-6-phosphate to glucosamine-1-phosphate. The chain is Phosphoglucosamine mutase from Listeria welshimeri serovar 6b (strain ATCC 35897 / DSM 20650 / CCUG 15529 / CIP 8149 / NCTC 11857 / SLCC 5334 / V8).